The chain runs to 81 residues: uncharacterized protein (81 aa).

The N-terminal stretch at 1-31 (MRYNSFLSVLALFNVLLWFTFILAISMTFSA) is a signal peptide. Residues 52-74 (WFFVLLPYVIGLFFAIFDSATIG) traverse the membrane as a helical segment.

Its subcellular location is the membrane. This is an uncharacterized protein from Pasteurella multocida (strain Pm70).